We begin with the raw amino-acid sequence, 767 residues long: Protein transport protein Sec23B (767 aa).

Residue A2 is modified to N-acetylalanine. Residues C61, C66, C85, and C88 each contribute to the Zn(2+) site. K564 carries the N6-acetyllysine modification. The Gelsolin-like repeat unit spans residues 634 to 720; sequence PEPVLLDSSS…EHGGSQARFL (87 aa).

The protein belongs to the SEC23/SEC24 family. SEC23 subfamily. In terms of assembly, COPII is composed of at least five proteins: the Sec23/24 complex, the Sec13/31 complex and Sar1. Interacts with SAR1A.

The protein resides in the cytoplasmic vesicle. The protein localises to the COPII-coated vesicle membrane. It localises to the endoplasmic reticulum membrane. It is found in the cytoplasm. Its subcellular location is the cytosol. Its function is as follows. Component of the coat protein complex II (COPII) which promotes the formation of transport vesicles from the endoplasmic reticulum (ER). The coat has two main functions, the physical deformation of the endoplasmic reticulum membrane into vesicles and the selection of cargo molecules for their transport to the Golgi complex. The polypeptide is Protein transport protein Sec23B (Mus musculus (Mouse)).